The following is a 205-amino-acid chain: CD83 antigen (205 aa).

The N-terminal stretch at 1–19 (MSRGLQLLLLSCAYSLAPA) is a signal peptide. Positions 20–114 (TPEVKVACSE…YRCTLQDPDG (95 aa)) constitute an Ig-like V-type domain. At 20–144 (TPEVKVACSE…EETFKKYRAE (125 aa)) the chain is on the extracellular side. C35 and C107 are disulfide-bonded. Basic and acidic residues predominate over residues 60-69 (METPQEDHLR). Positions 60–81 (METPQEDHLRGQHYHQKGQNGS) are disordered. N79, N96, and N117 each carry an N-linked (GlcNAc...) asparagine glycan. A helical transmembrane segment spans residues 145-166 (IVLLLALVIFYLTLIIFTCKFA). Residues 167–205 (RLQSIFPDFSKAGMERAFLPVTSPNKHLGLVTPHKTELV) lie on the Cytoplasmic side of the membrane.

In terms of assembly, monomer. Homodimer. Homotrimer. Interacts with MARCHF1; this interaction antagonizes MARCHF1-mediated MHC II and CD86 down-regulation. Post-translationally, glycosylated when expressed on activated dendritic cells. Expressed by activated lymphocytes, Langerhans cells and activatd dendritic cells.

It localises to the membrane. Its function is as follows. Transmembrane glycoprotein predominantly found on the surface of many immune cells including dendritic cells or lymphocytes that plays various roles in immune response regulation. Plays an essential role in CD4(+) T-selection, differentiation and stability by regulating the activity of the major E3 ubiquitin ligase responsible for controlling MHCII trafficking MARCHF8. Also inhibits MARCHF1 association with MHCII or CD86 to prevent their ubiquitination and subsequent degradation. In addition, acts as an important modulator of protective responses against acute infections. This Homo sapiens (Human) protein is CD83 antigen (CD83).